We begin with the raw amino-acid sequence, 329 residues long: Small ribosomal subunit protein RACK1 (329 aa).

7 WD repeats span residues 19 to 59 (GHNG…ATSP), 68 to 107 (GHSH…STRL), 110 to 149 (GHTQ…KFTL), 154 to 193 (AHQD…CNHT), 196 to 235 (DHTG…PLYK), 237 to 275 (EARN…VLAE), and 295 to 328 (PKAP…KSSS).

Belongs to the WD repeat G protein beta family. Ribosomal protein RACK1 subfamily.

This chain is Small ribosomal subunit protein RACK1 (gpbB), found in Dictyostelium discoideum (Social amoeba).